A 244-amino-acid chain; its full sequence is Carbonyl reductase [NADPH] 2 (244 aa).

An NADP(+)-binding site is contributed by 11-39 (LVTGAGKGIGRDTVKALHASGAKVVAVTR). At serine 42 the chain carries Phosphoserine. Serine 136 provides a ligand contact to substrate. The Proton acceptor role is filled by tyrosine 149. Serine 176 is subject to Phosphoserine.

Belongs to the short-chain dehydrogenases/reductases (SDR) family. In terms of assembly, homotetramer. Predominantly expressed in lung, in ciliated cells, non-ciliated bronchiolar cells and type-II alveolar pneumocytes. Also detected in adipose tissue (at protein level). Low expression in testis, heart, kidney, spleen, brain and liver.

The protein resides in the mitochondrion matrix. The catalysed reaction is a secondary alcohol + NADP(+) = a ketone + NADPH + H(+). May function in the pulmonary metabolism of endogenous carbonyl compounds, such as aliphatic aldehydes and ketones derived from lipid peroxidation, 3-ketosteroids and fatty aldehydes, as well as in xenobiotic metabolism. This Mus musculus (Mouse) protein is Carbonyl reductase [NADPH] 2 (Cbr2).